The primary structure comprises 43 residues: Protein PsbN (43 aa).

Residues 5 to 27 form a helical membrane-spanning segment; sequence TLVAISISGSLVSFTGYALYTAF.

Belongs to the PsbN family.

It localises to the plastid. It is found in the chloroplast thylakoid membrane. In terms of biological role, may play a role in photosystem I and II biogenesis. The protein is Protein PsbN of Lactoris fernandeziana.